A 224-amino-acid polypeptide reads, in one-letter code: Ribosome maturation factor RimP (224 aa).

Positions 194 to 224 (REGRIPGDDLGSEEAGEQSDETASGEAEDKE) are disordered. Over residues 203 to 213 (LGSEEAGEQSD) the composition is skewed to acidic residues.

Belongs to the RimP family.

It is found in the cytoplasm. Functionally, required for maturation of 30S ribosomal subunits. The sequence is that of Ribosome maturation factor RimP from Brucella anthropi (strain ATCC 49188 / DSM 6882 / CCUG 24695 / JCM 21032 / LMG 3331 / NBRC 15819 / NCTC 12168 / Alc 37) (Ochrobactrum anthropi).